The sequence spans 402 residues: Arginine biosynthesis bifunctional protein ArgJ (402 aa).

Positions 152, 178, 189, 275, 397, and 402 each coordinate substrate. Residue threonine 189 is the Nucleophile of the active site.

It belongs to the ArgJ family. Heterotetramer of two alpha and two beta chains.

The protein resides in the cytoplasm. It carries out the reaction N(2)-acetyl-L-ornithine + L-glutamate = N-acetyl-L-glutamate + L-ornithine. It catalyses the reaction L-glutamate + acetyl-CoA = N-acetyl-L-glutamate + CoA + H(+). It functions in the pathway amino-acid biosynthesis; L-arginine biosynthesis; L-ornithine and N-acetyl-L-glutamate from L-glutamate and N(2)-acetyl-L-ornithine (cyclic): step 1/1. Its pathway is amino-acid biosynthesis; L-arginine biosynthesis; N(2)-acetyl-L-ornithine from L-glutamate: step 1/4. Its function is as follows. Catalyzes two activities which are involved in the cyclic version of arginine biosynthesis: the synthesis of N-acetylglutamate from glutamate and acetyl-CoA as the acetyl donor, and of ornithine by transacetylation between N(2)-acetylornithine and glutamate. The polypeptide is Arginine biosynthesis bifunctional protein ArgJ (Symbiobacterium thermophilum (strain DSM 24528 / JCM 14929 / IAM 14863 / T)).